The sequence spans 436 residues: N-lysine methyltransferase SMYD2 (436 aa).

The region spanning 10-244 (GGLERFASPG…PGEEVFTSYI (235 aa)) is the SET domain. 20 to 22 (KGR) contributes to the S-adenosyl-L-methionine binding site. Positions 55, 58, 68, 71, 77, 81, 89, and 93 each coordinate Zn(2+). The MYND-type zinc-finger motif lies at 55 to 93 (CDGCFARKEGLSKCGRCKQAFYCNVECQKEDWPMHKLEC). S-adenosyl-L-methionine is bound by residues histidine 140, 209–210 (NH), and 261–263 (YFF).

Belongs to the class V-like SAM-binding methyltransferase superfamily.

The protein resides in the cytoplasm. It localises to the cytosol. The protein localises to the nucleus. The catalysed reaction is L-lysyl(4)-[histone H3] + 3 S-adenosyl-L-methionine = N(6),N(6),N(6)-trimethyl-L-lysyl(4)-[histone H3] + 3 S-adenosyl-L-homocysteine + 3 H(+). It catalyses the reaction L-lysyl-[protein] + S-adenosyl-L-methionine = N(6)-methyl-L-lysyl-[protein] + S-adenosyl-L-homocysteine + H(+). Its function is as follows. Protein-lysine N-methyltransferase that methylates both histones and non-histone proteins, including p53/TP53 and RB1. Specifically trimethylates histone H3 'Lys-4' (H3K4me3) in vivo. The activity requires interaction with HSP90alpha. Shows even higher methyltransferase activity on p53/TP53. Monomethylates 'Lys-370' of p53/TP53, leading to decreased DNA-binding activity and subsequent transcriptional regulation activity of p53/TP53. Monomethylates RB1 at 'Lys-860'. The sequence is that of N-lysine methyltransferase SMYD2 (SMYD2) from Gallus gallus (Chicken).